Here is a 419-residue protein sequence, read N- to C-terminus: Serine hydroxymethyltransferase (419 aa).

(6S)-5,6,7,8-tetrahydrofolate-binding positions include L121 and 125–127 (GHL). K229 bears the N6-(pyridoxal phosphate)lysine mark.

Belongs to the SHMT family. Homodimer. Requires pyridoxal 5'-phosphate as cofactor.

It is found in the cytoplasm. It catalyses the reaction (6R)-5,10-methylene-5,6,7,8-tetrahydrofolate + glycine + H2O = (6S)-5,6,7,8-tetrahydrofolate + L-serine. Its pathway is one-carbon metabolism; tetrahydrofolate interconversion. It participates in amino-acid biosynthesis; glycine biosynthesis; glycine from L-serine: step 1/1. Functionally, catalyzes the reversible interconversion of serine and glycine with tetrahydrofolate (THF) serving as the one-carbon carrier. This reaction serves as the major source of one-carbon groups required for the biosynthesis of purines, thymidylate, methionine, and other important biomolecules. Also exhibits THF-independent aldolase activity toward beta-hydroxyamino acids, producing glycine and aldehydes, via a retro-aldol mechanism. This is Serine hydroxymethyltransferase from Streptomyces griseus subsp. griseus (strain JCM 4626 / CBS 651.72 / NBRC 13350 / KCC S-0626 / ISP 5235).